Consider the following 246-residue polypeptide: Glandular kallikrein (246 aa).

The propeptide occupies 1–7 (APPIQSR). Positions 8–243 (IIGGRECEKN…YLDWINDTIT (236 aa)) constitute a Peptidase S1 domain. Disulfide bonds link cysteine 14-cysteine 158, cysteine 33-cysteine 49, cysteine 135-cysteine 204, cysteine 169-cysteine 183, and cysteine 194-cysteine 219. Histidine 48 serves as the catalytic Charge relay system. N-linked (GlcNAc...) asparagine glycosylation occurs at asparagine 85. Residues 85-104 (NLSLLKXHTKADGKDYSHDL) are kallikrein (autolysis) loop. Aspartate 103 (charge relay system) is an active-site residue. The active-site Charge relay system is the serine 198. An N-linked (GlcNAc...) asparagine glycan is attached at asparagine 239.

It belongs to the peptidase S1 family. Kallikrein subfamily. Monomer.

It carries out the reaction Preferential cleavage of Arg-|-Xaa bonds in small molecule substrates. Highly selective action to release kallidin (lysyl-bradykinin) from kininogen involves hydrolysis of Met-|-Xaa or Leu-|-Xaa.. Glandular kallikreins cleave Met-Lys and Arg-Ser bonds in kininogen to release Lys-bradykinin. This Sus scrofa (Pig) protein is Glandular kallikrein.